Here is a 137-residue protein sequence, read N- to C-terminus: Large ribosomal subunit protein uL16 (137 aa).

It belongs to the universal ribosomal protein uL16 family. Part of the 50S ribosomal subunit.

Its function is as follows. Binds 23S rRNA and is also seen to make contacts with the A and possibly P site tRNAs. The sequence is that of Large ribosomal subunit protein uL16 from Brucella abortus (strain S19).